The chain runs to 147 residues: Mineralocorticoid receptor (147 aa).

Positions 1 to 147 (FALSWRSYKH…SQALKVEFPA (147 aa)) constitute an NR LBD domain. 21-hydroxyprogesterone is bound by residues arginine 6 and threonine 134. Aldosterone is bound by residues arginine 6 and threonine 134. Progesterone is bound by residues arginine 6 and threonine 134.

It belongs to the nuclear hormone receptor family. NR3 subfamily.

It localises to the cytoplasm. The protein resides in the nucleus. In terms of biological role, receptor for both mineralocorticoids (MC) such as aldosterone and glucocorticoids (GC) such as corticosterone or cortisol. Binds to mineralocorticoid response elements (MRE) and transactivates target genes. The effect of MC is to increase ion and water transport and thus raise extracellular fluid volume and blood pressure and lower potassium levels. The protein is Mineralocorticoid receptor (NR3C2) of Gallus gallus (Chicken).